Consider the following 371-residue polypeptide: Jasmonate-induced oxygenase 2 (371 aa).

The 102-residue stretch at 219–320 (NIGACLRVNY…RVSLAFFYNP (102 aa)) folds into the Fe2OG dioxygenase domain. Arg225 provides a ligand contact to jasmonate. The 2-oxoglutarate site is built by Asn227 and Tyr229. The Fe cation site is built by His244, Asp246, and His301. Residues Arg311 and Ser313 each contribute to the 2-oxoglutarate site. Jasmonate-binding residues include Arg350 and Arg354.

This sequence belongs to the iron/ascorbate-dependent oxidoreductase family. Requires L-ascorbate as cofactor. Fe(2+) serves as cofactor.

It carries out the reaction jasmonate + 2-oxoglutarate + O2 = (1R,2R)-12-hydroxyjasmonate + succinate + CO2. Functionally, 2-oxoglutarate-dependent dioxygenase involved in the oxidation of jasmonate (JA), a stress-induced phytohormone synthesized in response to attack by pathogens and herbivores, which triggers the activation of defense responses via the JA-mediated signaling pathway. Converts JA to 12-hydroxyjasmonate (12OH-JA), an inactive form of JA. Is specific to free JA, and cannot oxidize the bioactive form jasmonoyl-L-isoleucine (JA-Ile) or other JA-amino acid conjugates. Prevents over-accumulation of JA and indirectly its bioactive form JA-Ile under stress response. Acts as a negative regulator of JA-mediated defense signaling, by contributing to 12OH-JA accumulation, which represses JA defense responses upon infection by the fungal pathogen Botrytis cinerea. Acts as a negative regulator of JA-mediated defense responses upon infestation by the herbivorous caterpillar Mamestra brassicae. May be involved in the catabolism of cytotoxic polycyclic aromatic hydrocarbons (PAHs). The polypeptide is Jasmonate-induced oxygenase 2 (Arabidopsis thaliana (Mouse-ear cress)).